The sequence spans 149 residues: Nucleoside diphosphate kinase (149 aa).

Positions 9, 57, 85, 91, 102, and 112 each coordinate ATP. His115 acts as the Pros-phosphohistidine intermediate in catalysis.

It belongs to the NDK family. In terms of assembly, homotetramer. The cofactor is Mg(2+).

The protein localises to the cytoplasm. The enzyme catalyses a 2'-deoxyribonucleoside 5'-diphosphate + ATP = a 2'-deoxyribonucleoside 5'-triphosphate + ADP. It carries out the reaction a ribonucleoside 5'-diphosphate + ATP = a ribonucleoside 5'-triphosphate + ADP. Functionally, major role in the synthesis of nucleoside triphosphates other than ATP. The ATP gamma phosphate is transferred to the NDP beta phosphate via a ping-pong mechanism, using a phosphorylated active-site intermediate. This chain is Nucleoside diphosphate kinase, found in Herpetosiphon aurantiacus (strain ATCC 23779 / DSM 785 / 114-95).